The following is a 336-amino-acid chain: MTRVFSGVKPTGHLTLGNYLGAMRRWAAVDQHRSDALFCVVDLHALTVDHDPARVRRLSRQAASLLLAAGLDPELCTVFVQSHVDEHARLSYVLECVATDGEMRRMIQYKEKAARERVRGGSVRLSLLTYPVLMAADILAYGTDEVPVGEDQTQHVELARDLAVRFNQRYGHTFVVPRATSPAVAARVMNLQEPASKMGKSDDTGPGIVYLLDEPDVVRKKVMRAVTDSGRDVVYDPEERAGLANLLEILAACTDGEPAELAGGYDSYGALKKDTAEAVVEMLRPVRERHMELSADPGYVDGVLREGAEKARAMARPTVDDAYRAIGLLPPVNAAR.

Residues 9-11 (KPT) and 17-18 (GN) contribute to the ATP site. The 'HIGH' region signature appears at 10–18 (PTGHLTLGN). Asp-137 contributes to the L-tryptophan binding site. ATP-binding positions include 149–151 (GED), Val-188, and 197–201 (KMGKS). The 'KMSKS' region signature appears at 197–201 (KMGKS).

This sequence belongs to the class-I aminoacyl-tRNA synthetase family. As to quaternary structure, homodimer.

It is found in the cytoplasm. It carries out the reaction tRNA(Trp) + L-tryptophan + ATP = L-tryptophyl-tRNA(Trp) + AMP + diphosphate + H(+). Catalyzes the attachment of tryptophan to tRNA(Trp). This chain is Tryptophan--tRNA ligase 1, found in Streptomyces coelicolor (strain ATCC BAA-471 / A3(2) / M145).